Here is a 236-residue protein sequence, read N- to C-terminus: Elastase-1 (236 aa).

The region spanning 1 to 236 (VVGGRVAQPN…AYISWMNGIM (236 aa)) is the Peptidase S1 domain. Cysteine 30 and cysteine 46 are oxidised to a cystine. Histidine 45 serves as the catalytic Charge relay system. The Ca(2+) site is built by glutamate 59, asparagine 61, threonine 64, glutamate 66, and glutamate 69. The Charge relay system role is filled by aspartate 93. 3 cysteine pairs are disulfide-bonded: cysteine 127–cysteine 193, cysteine 158–cysteine 174, and cysteine 183–cysteine 213. The active-site Charge relay system is serine 187.

Belongs to the peptidase S1 family. Elastase subfamily. Ca(2+) is required as a cofactor. Pancreas.

It is found in the secreted. It catalyses the reaction Hydrolysis of proteins, including elastin. Preferential cleavage: Ala-|-Xaa.. In terms of biological role, acts upon elastin. The sequence is that of Elastase-1 from Salmo salar (Atlantic salmon).